Reading from the N-terminus, the 150-residue chain is D-aminoacyl-tRNA deacylase (150 aa).

A Gly-cisPro motif, important for rejection of L-amino acids motif is present at residues 138–139 (GP).

It belongs to the DTD family. In terms of assembly, homodimer.

The protein resides in the cytoplasm. The enzyme catalyses glycyl-tRNA(Ala) + H2O = tRNA(Ala) + glycine + H(+). The catalysed reaction is a D-aminoacyl-tRNA + H2O = a tRNA + a D-alpha-amino acid + H(+). An aminoacyl-tRNA editing enzyme that deacylates mischarged D-aminoacyl-tRNAs. Also deacylates mischarged glycyl-tRNA(Ala), protecting cells against glycine mischarging by AlaRS. Acts via tRNA-based rather than protein-based catalysis; rejects L-amino acids rather than detecting D-amino acids in the active site. By recycling D-aminoacyl-tRNA to D-amino acids and free tRNA molecules, this enzyme counteracts the toxicity associated with the formation of D-aminoacyl-tRNA entities in vivo and helps enforce protein L-homochirality. The polypeptide is D-aminoacyl-tRNA deacylase (Petrotoga mobilis (strain DSM 10674 / SJ95)).